Reading from the N-terminus, the 368-residue chain is Cyclin-dependent kinase 2 (368 aa).

In terms of domain architecture, Protein kinase spans 45–330 (FCSLRRIGEG…AKGALSHRYF (286 aa)). ATP contacts are provided by residues 51 to 59 (IGEGTYGVV) and Lys-74. Catalysis depends on Asp-170, which acts as the Proton acceptor. Residues Asn-175 and Asp-188 each contribute to the Mg(2+) site.

The protein belongs to the protein kinase superfamily. CMGC Ser/Thr protein kinase family. CDC2/CDKX subfamily. As to quaternary structure, interacts with cye-1; the interaction likely regulates cdk-2 activity and is probably required for gld-1 phosphorylation. Mg(2+) serves as cofactor.

The enzyme catalyses L-seryl-[protein] + ATP = O-phospho-L-seryl-[protein] + ADP + H(+). It carries out the reaction L-threonyl-[protein] + ATP = O-phospho-L-threonyl-[protein] + ADP + H(+). Serine/threonine-protein kinase which, in association with cye-1, regulates proliferation, quiescent state and cell fate during the development of several cell lineages. In the embryo, initiates the establishment of cell polarity through the recruitment of the centrosomal proteins spd-2 and spd-5 during prophase. Phosphorylation and inhibition of the translational repressor gld-1 by the cdk-2/cye-1 complex regulates the pool of germline stem cells and the size of the mitotic zone in the gonads by preventing entry into meiosis. In Caenorhabditis elegans, this protein is Cyclin-dependent kinase 2.